The sequence spans 130 residues: Histidine triad nucleotide-binding protein 1 (130 aa).

An HIT domain is found at 22–130 (LFGKIIRKEI…GGRQLQWPPG (109 aa)). Positions 114–118 (HLHLH) match the Histidine triad motif motif.

This is Histidine triad nucleotide-binding protein 1 (hint-1) from Caenorhabditis elegans.